A 190-amino-acid chain; its full sequence is Potassium-transporting ATPase KdpC subunit (190 aa).

The helical transmembrane segment at 10 to 30 (TFIFLLLITGGVYPLLTTVLG) threads the bilayer.

This sequence belongs to the KdpC family. In terms of assembly, the system is composed of three essential subunits: KdpA, KdpB and KdpC.

The protein resides in the cell inner membrane. Functionally, part of the high-affinity ATP-driven potassium transport (or Kdp) system, which catalyzes the hydrolysis of ATP coupled with the electrogenic transport of potassium into the cytoplasm. This subunit acts as a catalytic chaperone that increases the ATP-binding affinity of the ATP-hydrolyzing subunit KdpB by the formation of a transient KdpB/KdpC/ATP ternary complex. This chain is Potassium-transporting ATPase KdpC subunit, found in Escherichia coli (strain SE11).